A 388-amino-acid polypeptide reads, in one-letter code: MIKNPKVLILTAHYGNGHVQVAKTLEQTFRQKGIKDVIVCDLFGESHPVITDITKYLYLKSYTIGKELYRLFYYGVEKIYDKKIASWYANFGRKRLKLLLQAEKPDIVINTFPIIAVPELKKQTGISIPVYNVLTDFCVHKIWIHREVDRYFVATDHVKKVMVDIGVPAEQIVETGIPIRSSFELKINSDIIYNKYQLCKNKKILLIVAGAHGVLGSVKELCQSFMSVPDLQVVVVCGKNEALKQDLLGLQEKNPDALKVFGYVENIDELFRVTSCMITKPGGITLSEAAALQVPVILYKPVPGQENENAMYFERKGAAVVIRDDSEVFAKTEALLQDDMRLLQMKEAMKSIYRPEPADHIVDTILAENHVEPNHIPIKSPALAQSFT.

The protein belongs to the glycosyltransferase 28 family. UgtP subfamily.

Its subcellular location is the cell membrane. The catalysed reaction is a 1,2-diacyl-3-O-(beta-D-glucopyranosyl)-sn-glycerol + UDP-alpha-D-glucose = a 1,2-diacyl-3-O-(beta-D-Glc-(1-&gt;6)-beta-D-Glc)-sn-glycerol + UDP + H(+). It carries out the reaction a 1,2-diacyl-3-O-(beta-D-Glc-(1-&gt;6)-beta-D-Glc)-sn-glycerol + UDP-alpha-D-glucose = a 1,2-diacyl-3-O-(beta-D-Glc-(1-&gt;6)-beta-D-Glc-(1-&gt;6)-beta-D-Glc)-sn-glycerol + UDP + H(+). The enzyme catalyses a 1,2-diacyl-sn-glycerol + UDP-alpha-D-glucose = a 1,2-diacyl-3-O-(beta-D-glucopyranosyl)-sn-glycerol + UDP + H(+). It functions in the pathway glycolipid metabolism; diglucosyl-diacylglycerol biosynthesis. Processive glucosyltransferase involved in the biosynthesis of both the bilayer- and non-bilayer-forming membrane glucolipids. Is able to successively transfer up to three glucosyl residues to diacylglycerol (DAG), thereby catalyzing the formation of beta-monoglucosyl-DAG (3-O-(beta-D-glucopyranosyl)-1,2-diacyl-sn-glycerol), beta-diglucosyl-DAG (3-O-(beta-D-glucopyranosyl-beta-(1-&gt;6)-D-glucopyranosyl)-1,2-diacyl-sn-glycerol) and beta-triglucosyl-DAG (3-O-(beta-D-glucopyranosyl-beta-(1-&gt;6)-D-glucopyranosyl-beta-(1-&gt;6)-D-glucopyranosyl)-1,2-diacyl-sn-glycerol). Beta-diglucosyl-DAG is the predominant glycolipid found in Bacillales and is also used as a membrane anchor for lipoteichoic acid (LTA). This Bacillus cereus (strain AH187) protein is Processive diacylglycerol beta-glucosyltransferase.